An 89-amino-acid chain; its full sequence is Large ribosomal subunit protein eL34 (89 aa).

A disordered region spans residues 1 to 32 (MPAPRFKSGSFKKISKRGPGNKTLTHHRRSKV).

It belongs to the eukaryotic ribosomal protein eL34 family.

This Methanococcus aeolicus (strain ATCC BAA-1280 / DSM 17508 / OCM 812 / Nankai-3) protein is Large ribosomal subunit protein eL34.